Reading from the N-terminus, the 215-residue chain is Ribosomal RNA small subunit methyltransferase G (215 aa).

Residues G78, L83, 128–129, and R146 each bind S-adenosyl-L-methionine; that span reads AE.

This sequence belongs to the methyltransferase superfamily. RNA methyltransferase RsmG family.

It localises to the cytoplasm. The catalysed reaction is guanosine(527) in 16S rRNA + S-adenosyl-L-methionine = N(7)-methylguanosine(527) in 16S rRNA + S-adenosyl-L-homocysteine. Its function is as follows. Specifically methylates the N7 position of guanine in position 527 of 16S rRNA. The sequence is that of Ribosomal RNA small subunit methyltransferase G from Anaeromyxobacter dehalogenans (strain 2CP-1 / ATCC BAA-258).